Consider the following 239-residue polypeptide: Small ribosomal subunit protein uS2c (239 aa).

The protein belongs to the universal ribosomal protein uS2 family.

It localises to the plastid. In Aneura mirabilis (Parasitic liverwort), this protein is Small ribosomal subunit protein uS2c (rps2).